A 622-amino-acid chain; its full sequence is UvrABC system protein C (622 aa).

The GIY-YIG domain occupies 13 to 92 (EKPGVYLMKN…IKKYRPKYNI (80 aa)). The 36-residue stretch at 204 to 239 (KDILDKLKNQMEEASNSLQFEKAASLRDKIFAVKKI) folds into the UVR domain.

The protein belongs to the UvrC family. In terms of assembly, interacts with UvrB in an incision complex.

Its subcellular location is the cytoplasm. Functionally, the UvrABC repair system catalyzes the recognition and processing of DNA lesions. UvrC both incises the 5' and 3' sides of the lesion. The N-terminal half is responsible for the 3' incision and the C-terminal half is responsible for the 5' incision. In Clostridium tetani (strain Massachusetts / E88), this protein is UvrABC system protein C.